The primary structure comprises 565 residues: E3 ubiquitin-protein ligase RNF168 (565 aa).

The RING-type zinc finger occupies C16–R55. S70 carries the phosphoserine modification. An LR motif 1 motif is present at residues L110–E128. Position 134 is a phosphoserine (S134). Residues E143–A151 carry the UMI motif motif. Disordered regions lie at residues L150–G223 and S252–C302. Over residues E157–A179 the composition is skewed to basic and acidic residues. An MIU motif 1 motif is present at residues M168 to E191. Over residues S181 to S201 the composition is skewed to polar residues. S197 is subject to Phosphoserine. K210 participates in a covalent cross-link: Glycyl lysine isopeptide (Lys-Gly) (interchain with G-Cter in SUMO2). The segment covering P275–S293 has biased composition (polar residues). S413 and S414 each carry phosphoserine. The short motif at R438–M461 is the MIU motif 2 element. A disordered region spans residues K458–K521. Residues R465–R476 carry the LR motif 2 motif. Positions Q466 to T477 are enriched in polar residues. Position 469 is a phosphoserine (S469). Over residues D504–E518 the composition is skewed to basic and acidic residues. Residue K525 forms a Glycyl lysine isopeptide (Lys-Gly) (interchain with G-Cter in SUMO2) linkage.

This sequence belongs to the RNF168 family. Monomer. Interacts with UBE2N/UBC13. In terms of processing, sumoylated with SUMO1 by PIAS4 in response to double-strand breaks (DSBs). Post-translationally, ubiquitinated.

The protein resides in the nucleus. It catalyses the reaction S-ubiquitinyl-[E2 ubiquitin-conjugating enzyme]-L-cysteine + [acceptor protein]-L-lysine = [E2 ubiquitin-conjugating enzyme]-L-cysteine + N(6)-ubiquitinyl-[acceptor protein]-L-lysine.. Its pathway is protein modification; protein ubiquitination. Its function is as follows. E3 ubiquitin-protein ligase required for accumulation of repair proteins to sites of DNA damage. Acts with UBE2N/UBC13 to amplify the RNF8-dependent histone ubiquitination. Recruited to sites of DNA damage at double-strand breaks (DSBs) by binding to ubiquitinated histone H2A and H2AX and amplifies the RNF8-dependent H2A ubiquitination, promoting the formation of 'Lys-63'-linked ubiquitin conjugates. This leads to concentrate ubiquitinated histones H2A and H2AX at DNA lesions to the threshold required for recruitment of TP53BP1 and BRCA1. Also recruited at DNA interstrand cross-links (ICLs) sites and promotes accumulation of 'Lys-63'-linked ubiquitination of histones H2A and H2AX, leading to recruitment of FAAP20 and Fanconi anemia (FA) complex, followed by interstrand cross-link repair. H2A ubiquitination also mediates the ATM-dependent transcriptional silencing at regions flanking DSBs in cis, a mechanism to avoid collision between transcription and repair intermediates. Also involved in class switch recombination in immune system, via its role in regulation of DSBs repair. Following DNA damage, promotes the ubiquitination and degradation of JMJD2A/KDM4A in collaboration with RNF8, leading to unmask H4K20me2 mark and promote the recruitment of TP53BP1 at DNA damage sites. Not able to initiate 'Lys-63'-linked ubiquitination in vitro; possibly due to partial occlusion of the UBE2N/UBC13-binding region. Catalyzes monoubiquitination of 'Lys-13' and 'Lys-15' of nucleosomal histone H2A (H2AK13Ub and H2AK15Ub, respectively). The sequence is that of E3 ubiquitin-protein ligase RNF168 from Mus musculus (Mouse).